Consider the following 629-residue polypeptide: FAST kinase domain-containing protein 4 (629 aa).

The RAP domain maps to 559 to 617 (IAFLRWEFPNFNSRSKDLLGRFVLARRHVLAAGFLVVDVPYYEWLDLKSEWQKTAYLKD).

This sequence belongs to the FAST kinase family.

It is found in the mitochondrion matrix. Its function is as follows. Plays a role in processing of mitochondrial RNA precursors and in stabilization of a subset of mature mitochondrial RNA species, such as MT-CO1, MT-CO2, MT-CYB, MT-CO3, MT-ND3, MT-ND5 and MT-ATP8/6. May play a role in cell cycle progression. This chain is FAST kinase domain-containing protein 4 (Tbrg4), found in Rattus norvegicus (Rat).